The primary structure comprises 83 residues: Putative membrane protein insertion efficiency factor (83 aa).

Residues 62–83 (KGGYDPVPPKSVKSAGNSKDSK) are disordered.

The protein belongs to the UPF0161 family.

The protein resides in the cell inner membrane. In terms of biological role, could be involved in insertion of integral membrane proteins into the membrane. The sequence is that of Putative membrane protein insertion efficiency factor from Chlorobaculum tepidum (strain ATCC 49652 / DSM 12025 / NBRC 103806 / TLS) (Chlorobium tepidum).